The following is a 281-amino-acid chain: Transcription factor LBX1 (281 aa).

A compositionally biased stretch (basic and acidic residues) spans Met1–Leu20. Residues Met1 to Pro35 are disordered. Positions Arg125–Leu184 form a DNA-binding region, homeobox. The disordered stretch occupies residues Asn214–Asp281. Residues Ser253 to Asp267 show a composition bias toward polar residues. Residues Cys268–Asp281 are compositionally biased toward acidic residues.

Interacts with SKOR1 which acts as a transcriptional corepressor.

It localises to the nucleus. Its function is as follows. Transcription factor required for the development of GABAergic interneurons in the dorsal horn of the spinal cord and migration and further development of hypaxial muscle precursor cells for limb muscles, diaphragm and hypoglossal cord. The protein is Transcription factor LBX1 (LBX1) of Homo sapiens (Human).